The primary structure comprises 128 residues: Large ribosomal subunit protein bL17 (128 aa).

This sequence belongs to the bacterial ribosomal protein bL17 family. As to quaternary structure, part of the 50S ribosomal subunit. Contacts protein L32.

The polypeptide is Large ribosomal subunit protein bL17 (Pseudomonas syringae pv. tomato (strain ATCC BAA-871 / DC3000)).